The following is a 575-amino-acid chain: MMKLRHKNKKPGKGSKGCKKPAKQNGKKAATKVAYSPQFFHSNDHASREAELKKKRVGEMREKQQAAREQERHRRRTIESYCQDVLRRQEEFEHKEEVLQELNMFPQLDDEATRKAYYKEFHKVVEYSDVILEVLDSRDPLGCRCFQMEETVLRAEGNKKLVLVLNKIDLVPKEVVEKWLEYLRNELPTVAFKASTQHQVKNLNRCSVPVDQASESLLKSKACFGAENLMRVLGNYCRLGEVRTHIRVGVVGLPNVGKSSLINSLKRSRACSVGAVPGVTKFMQEVYLDKFIRLLDAPGIVPGPNSEVGTILRNCIHVQKLADPVTPVETILQRCNLEEISSYYGVSGFQTTEHFLTAVAHRLGKKKKGGIYSQEQAAKAVLADWVSGKISFYTLPPSTHTLPTHLSAEIVKEMTEVFDIEDTEQANEDTMECLATGESDELLGDMDPLEMEIKWLHSPMVKIADAMENKTTVYKIGDLTGYCTNPNRHQMGWAKRNVDLHPRNNSMVDVCPVDRRPVLQRIMETDPLQQGQALASALKKKKKIQKRADKLASKLSDSMMSALDLSGNADDSAGD.

Basic residues predominate over residues 1 to 30 (MMKLRHKNKKPGKGSKGCKKPAKQNGKKAA). Residues 1-75 (MMKLRHKNKK…AAREQERHRR (75 aa)) form a disordered region. The segment at 9–28 (KKPGKGSKGCKKPAKQNGKK) is required for nucleolar localization. Residues 42–72 (SNDHASREAELKKKRVGEMREKQQAAREQER) are compositionally biased toward basic and acidic residues. A coiled-coil region spans residues 51–79 (ELKKKRVGEMREKQQAAREQERHRRRTIE). In terms of domain architecture, CP-type G spans 118-303 (YKEFHKVVEY…LLDAPGIVPG (186 aa)). GTP is bound by residues 166–169 (NKID), 252–259 (GLPNVGKS), and 296–299 (DAPG). Lys470 is covalently cross-linked (Glycyl lysine isopeptide (Lys-Gly) (interchain with G-Cter in SUMO1)).

This sequence belongs to the TRAFAC class YlqF/YawG GTPase family. In terms of assembly, interacts with MDM2; this interaction, which occurs in the nucleoplasm, stabilizes MDM2. Indirectly interacts with TP53, via MDM2-binding. Interacts with TERF1; this interaction probably occurs in the nucleoplasm and is increased during mitosis, when the nucleolus is disassembled. This binding may promote TERF1 homodimerization. Interacts with TERT.

Its subcellular location is the nucleus. It localises to the nucleolus. In terms of biological role, stabilizes TERF1 telomeric association by preventing TERF1 recruitment by PML. Stabilizes TERF1 protein by preventing its ubiquitination and hence proteasomal degradation. Does so by interfering with TERF1-binding to FBXO4 E3 ubiquitin-protein ligase. Required for cell proliferation. By stabilizing TRF1 protein during mitosis, promotes metaphase-to-anaphase transition. Stabilizes MDM2 protein by preventing its ubiquitination, and hence proteasomal degradation. By acting on MDM2, may affect TP53 activity. Required for normal processing of ribosomal pre-rRNA. Binds GTP. In Bos taurus (Bovine), this protein is Guanine nucleotide-binding protein-like 3-like protein (GNL3L).